We begin with the raw amino-acid sequence, 191 residues long: Xanthine phosphoribosyltransferase (191 aa).

Positions 20 and 27 each coordinate xanthine. 128–132 (ANGQA) is a binding site for 5-phospho-alpha-D-ribose 1-diphosphate. Lys156 contributes to the xanthine binding site.

The protein belongs to the purine/pyrimidine phosphoribosyltransferase family. Xpt subfamily. Homodimer.

The protein resides in the cytoplasm. The enzyme catalyses XMP + diphosphate = xanthine + 5-phospho-alpha-D-ribose 1-diphosphate. It functions in the pathway purine metabolism; XMP biosynthesis via salvage pathway; XMP from xanthine: step 1/1. In terms of biological role, converts the preformed base xanthine, a product of nucleic acid breakdown, to xanthosine 5'-monophosphate (XMP), so it can be reused for RNA or DNA synthesis. The protein is Xanthine phosphoribosyltransferase of Acinetobacter baylyi (strain ATCC 33305 / BD413 / ADP1).